Here is a 122-residue protein sequence, read N- to C-terminus: Putative iron-sulfur cluster insertion protein ErpA (122 aa).

Iron-sulfur cluster is bound by residues C50, C114, and C116.

It belongs to the HesB/IscA family. Homodimer. Iron-sulfur cluster is required as a cofactor.

Functionally, required for insertion of 4Fe-4S clusters. The protein is Putative iron-sulfur cluster insertion protein ErpA of Bordetella petrii (strain ATCC BAA-461 / DSM 12804 / CCUG 43448).